A 323-amino-acid polypeptide reads, in one-letter code: Fructose-bisphosphate aldolase (323 aa).

A beta-D-fructose 1,6-bisphosphate-binding site is contributed by serine 50. Aspartate 83 acts as the Proton donor in catalysis. Histidine 84 and histidine 178 together coordinate Zn(2+). The beta-D-fructose 1,6-bisphosphate site is built by histidine 178, glycine 179, and lysine 182. Histidine 210 is a binding site for Zn(2+). Beta-D-fructose 1,6-bisphosphate contacts are provided by glycine 211, serine 213, asparagine 253, aspartate 255, serine 256, arginine 259, and arginine 280.

It belongs to the class II fructose-bisphosphate aldolase family. Homodimer. The cofactor is Zn(2+).

The catalysed reaction is beta-D-fructose 1,6-bisphosphate = D-glyceraldehyde 3-phosphate + dihydroxyacetone phosphate. Its pathway is carbohydrate degradation; glycolysis; D-glyceraldehyde 3-phosphate and glycerone phosphate from D-glucose: step 4/4. In terms of biological role, plays a key role in glycolysis by catalyzing the cleavage of fructose 1,6-bisphosphate into dihydroxyacetone phosphate and glyceraldehyde 3-phosphate. Does not cleave D-tagatose-1,6-bisphosphate. The chain is Fructose-bisphosphate aldolase from Giardia intestinalis (strain ATCC 50803 / WB clone C6) (Giardia lamblia).